The primary structure comprises 122 residues: Toxin CSTX-1 (122 aa).

The first 20 residues, 1-20, serve as a signal peptide directing secretion; the sequence is MKVLIISAVLFITIFSNISA. The propeptide occupies 21 to 47; it reads EIEDDFLEDESFEAEDIIPFFENEQAR. 4 cysteine pairs are disulfide-bonded: Cys-49-Cys-64, Cys-56-Cys-73, Cys-63-Cys-91, and Cys-75-Cys-89. Residues 99–112 are predicted alpha-helix; the sequence is AIETGLNIFRGLFK. The residue at position 108 (Arg-108) is an Arginine amide; in CSTX-2a. Position 121 is a lysine amide; in omega-ctenitoxin-Cs1a (Lys-121).

Belongs to the neurotoxin 19 (CSTX) family. 04 (U1-Lctx) subfamily. In terms of assembly, monomer. Interacts with CSTX-13 (AC P83919) (Kd=430 nM), but does not interact with CSTX-9 (AC P58604). Expressed by the venom gland.

It is found in the secreted. The protein resides in the target cell membrane. Functionally, spider venom toxin that shows calcium channel blocking activity and exhibits cytolytic activity by affecting the outer leaflet curvature and/or pore formation across the membrane. It blocks L-type calcium channels (Cav1/CACNA1) in mammalian neurons at nanomolar concentrations. Furthermore, it produces a slow voltage-independent block of mid/low and high voltage-activated calcium channels in cockroach neurons. Potassium ions, histamine, M-ctenitoxin-Cs1a (AC P83619), CSTX-9 (AC P58604), and CSTX-13 (AC P83919) synergistically increase the insecticidal activity of this toxin. In vivo, it causes paralysis in blow flies and provokes death in drosophila. Blocks voltage-activated calcium channels (Cav). Does not induce cell membrane permeability increase when tested on Xenopus oocytes. No alpha-helical structures are detectable. Is 7-fold less neurotoxic than omega-ctenitoxin-Cs1a on drosophila flies. Its function is as follows. Blocks voltage-activated calcium channels (Cav). Is 190-fold less neurotoxic than omega-ctenitoxin-Cs1a on drosophila flies. This Cupiennius salei (American wandering spider) protein is Toxin CSTX-1.